The following is a 617-amino-acid chain: Lipoteichoic acid synthase-like YvgJ (617 aa).

At 1-10 (MKGTFFHNQR) the chain is on the cytoplasmic side. The chain crosses the membrane as a helical span at residues 11–31 (FLCFSILFMWIKTYVIYKLGF). Over 32 to 41 (DLQIDTLLEE) the chain is Extracellular. The chain crosses the membrane as a helical span at residues 42 to 62 (LMLLVNPLSFILPLFGIGLFL). The Cytoplasmic portion of the chain corresponds to 63-68 (KENKQR). Residues 69 to 89 (AFLLIANLVLTVILISNTIFY) traverse the membrane as a helical segment. Residues 90–115 (GFYIDFITIPVLFQASNMSDMGSSVK) lie on the Extracellular side of the membrane. The helical transmembrane segment at 116–136 (ELFHPLFIALFVDLVFLLLFA) threads the bilayer. Over 137–153 (RKTKHPQTKAAPHTIKR) the chain is Cytoplasmic. The helical transmembrane segment at 154–171 (YYAASCGMLLCTLALAEV) threads the bilayer. At 172 to 617 (QQPKLLAHSF…LNGDLLRFSE (446 aa)) the chain is on the extracellular side. Mn(2+)-binding residues include glutamate 251 and threonine 293. Residue threonine 293 is part of the active site. A substrate-binding site is contributed by histidine 408. Mn(2+)-binding residues include aspartate 467 and histidine 468.

Belongs to the LTA synthase family. In terms of processing, proteolytically cleaved.

The protein localises to the cell membrane. It localises to the secreted. The sequence is that of Lipoteichoic acid synthase-like YvgJ (yvgJ) from Bacillus subtilis (strain 168).